The sequence spans 206 residues: Small ribosomal subunit protein uS2 (206 aa).

This sequence belongs to the universal ribosomal protein uS2 family.

The polypeptide is Small ribosomal subunit protein uS2 (Pyrobaculum neutrophilum (strain DSM 2338 / JCM 9278 / NBRC 100436 / V24Sta) (Thermoproteus neutrophilus)).